The primary structure comprises 338 residues: Aspartate carbamoyltransferase catalytic subunit (338 aa).

2 residues coordinate carbamoyl phosphate: Arg59 and Thr60. Lys87 is a binding site for L-aspartate. Carbamoyl phosphate-binding residues include Arg109, His142, and Gln145. 2 residues coordinate L-aspartate: Arg182 and Arg253. Residues Gly294 and Pro295 each coordinate carbamoyl phosphate.

It belongs to the aspartate/ornithine carbamoyltransferase superfamily. ATCase family. In terms of assembly, heterododecamer (2C3:3R2) of six catalytic PyrB chains organized as two trimers (C3), and six regulatory PyrI chains organized as three dimers (R2).

The enzyme catalyses carbamoyl phosphate + L-aspartate = N-carbamoyl-L-aspartate + phosphate + H(+). It participates in pyrimidine metabolism; UMP biosynthesis via de novo pathway; (S)-dihydroorotate from bicarbonate: step 2/3. In terms of biological role, catalyzes the condensation of carbamoyl phosphate and aspartate to form carbamoyl aspartate and inorganic phosphate, the committed step in the de novo pyrimidine nucleotide biosynthesis pathway. The sequence is that of Aspartate carbamoyltransferase catalytic subunit from Prochlorococcus marinus (strain MIT 9515).